Consider the following 356-residue polypeptide: Nuclear hormone receptor family member nhr-169 (356 aa).

A DNA-binding region (nuclear receptor) is located at residues 16–90 (DPICSVCNFS…AGMKRSLVKE (75 aa)). 2 consecutive NR C4-type zinc fingers follow at residues 19-40 (CSVC…CSAC) and 56-72 (CKKD…CRAC). Residues 144 to 356 (DVSKILKTTP…KLYLHMGLPF (213 aa)) form the NR LBD domain.

This sequence belongs to the nuclear hormone receptor family.

The protein resides in the nucleus. Its function is as follows. Orphan nuclear receptor. The protein is Nuclear hormone receptor family member nhr-169 (nhr-169) of Caenorhabditis elegans.